The primary structure comprises 410 residues: Aspartate aminotransferase (410 aa).

L-aspartate contacts are provided by glycine 47, tryptophan 135, and asparagine 185. Lysine 249 carries the N6-(pyridoxal phosphate)lysine modification. Position 385 (arginine 385) interacts with L-aspartate.

Belongs to the class-I pyridoxal-phosphate-dependent aminotransferase family. Homodimer. Pyridoxal 5'-phosphate serves as cofactor.

The protein localises to the cytoplasm. The enzyme catalyses L-aspartate + 2-oxoglutarate = oxaloacetate + L-glutamate. Its function is as follows. Catalyzes the reversible conversion of aspartate and 2-oxoglutarate to glutamate and oxaloacetate. The chain is Aspartate aminotransferase from Rhizobium meliloti (Ensifer meliloti).